Consider the following 75-residue polypeptide: Small ribosomal subunit protein bS16 (75 aa).

The protein belongs to the bacterial ribosomal protein bS16 family.

In Campylobacter fetus subsp. fetus (strain 82-40), this protein is Small ribosomal subunit protein bS16.